Consider the following 44-residue polypeptide: Hyaluronidase CdtHya1 (44 aa).

The protein belongs to the glycosyl hydrolase 56 family. Monomer. Contains disulfide bonds. Post-translationally, glycosylated. Expressed by the venom gland.

Its subcellular location is the secreted. It catalyses the reaction Random hydrolysis of (1-&gt;4)-linkages between N-acetyl-beta-D-glucosamine and D-glucuronate residues in hyaluronate.. Snake venom endo-hyaluronidase that degrades hyaluronan to smaller oligosaccharide fragments. In venom, it is not toxic by itself, but increases the diffusion of other venom proteins such as crotoxin (a neurotoxic and myotoxic PLA2) by degrading the extracellular matrix. In addition, it displays antiedematogenic activity, since it significantly diminishes the oedematogenic activity of crotoxin (probably by direct substrate hydrolysis, since hyaluronan possesses strong water-binding capacity). The sequence is that of Hyaluronidase CdtHya1 from Crotalus durissus terrificus (South American rattlesnake).